The sequence spans 163 residues: MATPRRAQLDDKTDITGARVVIVEARFYDDIQDALLEGAKTELDAAGVAYDILSVPGALEIPAAIAIALDAAKKNGRPYEGAVALGCVIRGDTIHFEIVSAESARGLMDLSVSRSLALGNGIITVNNTEQAWERARADDLNKGGDAARAAIQMIRIKRKLAKP.

Residues Phe27, 58–60 (ALE), and 87–89 (CVI) contribute to the 5-amino-6-(D-ribitylamino)uracil site. Residue 92–93 (DT) coordinates (2S)-2-hydroxy-3-oxobutyl phosphate. The active-site Proton donor is His95. Residue Asn120 coordinates 5-amino-6-(D-ribitylamino)uracil. Residue Arg134 coordinates (2S)-2-hydroxy-3-oxobutyl phosphate.

It belongs to the DMRL synthase family.

The catalysed reaction is (2S)-2-hydroxy-3-oxobutyl phosphate + 5-amino-6-(D-ribitylamino)uracil = 6,7-dimethyl-8-(1-D-ribityl)lumazine + phosphate + 2 H2O + H(+). Its pathway is cofactor biosynthesis; riboflavin biosynthesis; riboflavin from 2-hydroxy-3-oxobutyl phosphate and 5-amino-6-(D-ribitylamino)uracil: step 1/2. Functionally, catalyzes the formation of 6,7-dimethyl-8-ribityllumazine by condensation of 5-amino-6-(D-ribitylamino)uracil with 3,4-dihydroxy-2-butanone 4-phosphate. This is the penultimate step in the biosynthesis of riboflavin. In Afipia carboxidovorans (strain ATCC 49405 / DSM 1227 / KCTC 32145 / OM5) (Oligotropha carboxidovorans), this protein is 6,7-dimethyl-8-ribityllumazine synthase.